The sequence spans 217 residues: Uracil-DNA glycosylase (217 aa).

The active-site Proton acceptor is the D62.

Belongs to the uracil-DNA glycosylase (UDG) superfamily. UNG family.

It is found in the cytoplasm. The catalysed reaction is Hydrolyzes single-stranded DNA or mismatched double-stranded DNA and polynucleotides, releasing free uracil.. In terms of biological role, excises uracil residues from the DNA which can arise as a result of misincorporation of dUMP residues by DNA polymerase or due to deamination of cytosine. The protein is Uracil-DNA glycosylase of Streptococcus pyogenes serotype M1.